The sequence spans 440 residues: Xylose isomerase (440 aa).

Active-site residues include His-100 and Asp-103. Residues Glu-231, Glu-267, His-270, Asp-295, Asp-306, Asp-308, and Asp-338 each coordinate Mg(2+).

This sequence belongs to the xylose isomerase family. As to quaternary structure, homotetramer. Mg(2+) is required as a cofactor.

The protein localises to the cytoplasm. The enzyme catalyses alpha-D-xylose = alpha-D-xylulofuranose. The sequence is that of Xylose isomerase from Burkholderia thailandensis (strain ATCC 700388 / DSM 13276 / CCUG 48851 / CIP 106301 / E264).